The following is a 486-amino-acid chain: UDP-N-acetylmuramate--L-alanine ligase (486 aa).

Residue 129-135 coordinates ATP; the sequence is GTHGKTT.

It belongs to the MurCDEF family.

The protein resides in the cytoplasm. It carries out the reaction UDP-N-acetyl-alpha-D-muramate + L-alanine + ATP = UDP-N-acetyl-alpha-D-muramoyl-L-alanine + ADP + phosphate + H(+). Its pathway is cell wall biogenesis; peptidoglycan biosynthesis. In terms of biological role, cell wall formation. The protein is UDP-N-acetylmuramate--L-alanine ligase of Vibrio cholerae serotype O1 (strain ATCC 39541 / Classical Ogawa 395 / O395).